Here is a 102-residue protein sequence, read N- to C-terminus: ATP-dependent Clp protease adapter protein ClpS (102 aa).

Over residues methionine 1–leucine 18 the composition is skewed to basic and acidic residues. Positions methionine 1–proline 21 are disordered.

It belongs to the ClpS family. As to quaternary structure, binds to the N-terminal domain of the chaperone ClpA.

Its function is as follows. Involved in the modulation of the specificity of the ClpAP-mediated ATP-dependent protein degradation. The chain is ATP-dependent Clp protease adapter protein ClpS from Idiomarina loihiensis (strain ATCC BAA-735 / DSM 15497 / L2-TR).